A 682-amino-acid polypeptide reads, in one-letter code: Transcription activator of gluconeogenesis PODANS_4_8760 (682 aa).

The tract at residues 1 to 72 (MPEDGGPFGS…KDPLRPRRKK (72 aa)) is disordered. A compositionally biased stretch (low complexity) spans 9–21 (GSEAAEASGAMSE). 2 stretches are compositionally biased toward basic and acidic residues: residues 29 to 41 (HEPH…DRMS) and 54 to 67 (GEVK…DPLR). The zn(2)-C6 fungal-type DNA-binding region spans 77 to 105 (CYACQRAHLTCGDERPCQRCIKRGLQDSC). Disordered regions lie at residues 122–148 (EALR…RHHS), 181–211 (LTES…SGMV), 325–375 (PAGP…RPSK), 509–541 (NRNT…AASG), and 586–622 (TDKP…HSIL). Polar residues-rich tracts occupy residues 185–206 (LPFN…SNPP), 329–345 (TSLQ…QPTT), and 354–373 (PTMS…NSRP).

It belongs to the ERT1/acuK family.

The protein localises to the nucleus. In terms of biological role, transcription factor which regulates nonfermentable carbon utilization. Activator of gluconeogenetic genes. This chain is Transcription activator of gluconeogenesis PODANS_4_8760, found in Podospora anserina (strain S / ATCC MYA-4624 / DSM 980 / FGSC 10383) (Pleurage anserina).